We begin with the raw amino-acid sequence, 259 residues long: Protein N-terminal and lysine N-methyltransferase efm7 (259 aa).

S-adenosyl-L-methionine contacts are provided by residues W53, 80–82 (GAA), D102, W138, and A164.

This sequence belongs to the class I-like SAM-binding methyltransferase superfamily. EFM7 family.

Its subcellular location is the cytoplasm. S-adenosyl-L-methionine-dependent protein methyltransferase that trimethylates the N-terminal glycine 'Gly-2' of elongation factor 1-alpha, before also catalyzing the mono- and dimethylation of 'Lys-3'. The sequence is that of Protein N-terminal and lysine N-methyltransferase efm7 from Emericella nidulans (strain FGSC A4 / ATCC 38163 / CBS 112.46 / NRRL 194 / M139) (Aspergillus nidulans).